The following is a 106-amino-acid chain: NADH dehydrogenase [ubiquinone] iron-sulfur protein 5 (106 aa).

Residues 30-74 form the CHCH domain; sequence PSRCHAFEKEWIECAHGIGSIRAEKECKIEFEDFRECLLRQKTMK. 2 consecutive short sequence motifs (cx9C motif) follow at residues 33–43 and 56–66; these read CHAFEKEWIEC and CKIEFEDFREC. Cystine bridges form between cysteine 33/cysteine 66 and cysteine 43/cysteine 56. A disordered region spans residues 84–106; sequence EKLIKEGKYTPPPHHSGQEEPRS.

It belongs to the complex I NDUFS5 subunit family. As to quaternary structure, mammalian complex I is composed of 45 different subunits. This is a component of the iron-sulfur (IP) fragment of the enzyme.

It is found in the mitochondrion inner membrane. The protein localises to the mitochondrion intermembrane space. Accessory subunit of the mitochondrial membrane respiratory chain NADH dehydrogenase (Complex I), that is believed not to be involved in catalysis. Complex I functions in the transfer of electrons from NADH to the respiratory chain. The immediate electron acceptor for the enzyme is believed to be ubiquinone. This is NADH dehydrogenase [ubiquinone] iron-sulfur protein 5 (NDUFS5) from Bos taurus (Bovine).